The following is a 340-amino-acid chain: MRHRGPEEEACGVWLDAAALKRRKMQTHLIKLGTKMLPLLPGERKPNDPFTQRRGTRQTSIASFVTLQSGMASGGNQKNIFSLKENQTNKECKRTQLDCLDDGLLSPLVTSAPADIQEAGHPRSPQISGCQGLEMSSLTMMSLTQPDVLMGTGESKGPLDSSFSQYLERSCLLDQREAKRKGEGLRESKTDCPGMGSHIRPPGSKCHQPLDKAEMGKRGPTKENRQAPVHLQTYRSGSCSRKKTLLVTESPCPLSLFPWDSERSDRDSWSQLFTEDSQGQQVIAHNTKMPFRDVTNARNQGSGQFPDSPQAQGQDGPAQLHLQSYLLFTQDSEGNRVIRH.

The interaction with AURKA stretch occupies residues 175-340 (QREAKRKGEG…DSEGNRVIRH (166 aa)). The segment covering 178–190 (AKRKGEGLRESKT) has biased composition (basic and acidic residues). A disordered region spans residues 178–209 (AKRKGEGLRESKTDCPGMGSHIRPPGSKCHQP). Residues 266–340 (RDSWSQLFTE…DSEGNRVIRH (75 aa)) form an interaction with RBBP8/CtIP region. S277 is subject to Phosphoserine. The disordered stretch occupies residues 293–317 (DVTNARNQGSGQFPDSPQAQGQDGP). The segment covering 296–313 (NARNQGSGQFPDSPQAQG) has biased composition (polar residues).

The protein belongs to the AUNIP family. In terms of assembly, interacts (via C-terminus) with AURKA (via C-terminus). Interacts (via N-terminus) with NIN; this interaction blocks NIN phosphorylation by both AURKA and GSK3B. Identified in a complex with NIN and AURKA. Interacts with RBBP8/CtIP.

The protein resides in the nucleus. Its subcellular location is the chromosome. It is found in the cytoplasm. It localises to the cytoskeleton. The protein localises to the microtubule organizing center. The protein resides in the centrosome. Its subcellular location is the spindle pole. DNA-binding protein that accumulates at DNA double-strand breaks (DSBs) following DNA damage and promotes DNA resection and homologous recombination. Serves as a sensor of DNA damage: binds DNA with a strong preference for DNA substrates that mimic structures generated at stalled replication forks, and anchors RBBP8/CtIP to DSB sites to promote DNA end resection and ensuing homologous recombination repair. Inhibits non-homologous end joining (NHEJ). Required for the dynamic movement of AURKA at the centrosomes and spindle apparatus during the cell cycle. This Mus musculus (Mouse) protein is Aurora kinase A- and ninein-interacting protein.